The primary structure comprises 387 residues: Intraflagellar transport protein 57 (387 aa).

The protein belongs to the IFT57 family.

The protein resides in the cell projection. It localises to the cilium. It is found in the flagellum. Its subcellular location is the cytoplasm. The protein localises to the cytoskeleton. The protein resides in the flagellum axoneme. It localises to the flagellum basal body. Its function is as follows. Component of the intraflagellar transport complex B (IFT-B) involved in flagellar assembly. The polypeptide is Intraflagellar transport protein 57 (Giardia intestinalis (strain ATCC 50803 / WB clone C6) (Giardia lamblia)).